The chain runs to 235 residues: MTELARLKFYATQPHSCSYLPEEQATTLFLDPSQPMDVHVYADLSEMGFRRSGDHLYRPHCQNCNACVPARIPVAQFNPNRQQKRIFKRNVDLQVRPVKPAFSEEYFDLYQRYIEQRHADGDMYPPSRDQFSTFLVRDLPFSRFYEFRLDGRLLAVAVTDLLPNGLSAVYTFYEPQEERRSLGRYAILWQIAEAQRLGLEAVYLGYWIKNCKKMNYKTQYRPIELLINQRWVVLN.

The protein belongs to the R-transferase family. Bpt subfamily.

The protein resides in the cytoplasm. It carries out the reaction N-terminal L-glutamyl-[protein] + L-leucyl-tRNA(Leu) = N-terminal L-leucyl-L-glutamyl-[protein] + tRNA(Leu) + H(+). It catalyses the reaction N-terminal L-aspartyl-[protein] + L-leucyl-tRNA(Leu) = N-terminal L-leucyl-L-aspartyl-[protein] + tRNA(Leu) + H(+). Its function is as follows. Functions in the N-end rule pathway of protein degradation where it conjugates Leu from its aminoacyl-tRNA to the N-termini of proteins containing an N-terminal aspartate or glutamate. The sequence is that of Aspartate/glutamate leucyltransferase from Pseudomonas fluorescens (strain Pf0-1).